Reading from the N-terminus, the 319-residue chain is Ribosomal RNA small subunit methyltransferase H (319 aa).

S-adenosyl-L-methionine is bound by residues 39–41 (GGH), D59, F83, D104, and Q111.

The protein belongs to the methyltransferase superfamily. RsmH family.

Its subcellular location is the cytoplasm. The enzyme catalyses cytidine(1402) in 16S rRNA + S-adenosyl-L-methionine = N(4)-methylcytidine(1402) in 16S rRNA + S-adenosyl-L-homocysteine + H(+). Its function is as follows. Specifically methylates the N4 position of cytidine in position 1402 (C1402) of 16S rRNA. The chain is Ribosomal RNA small subunit methyltransferase H from Ralstonia nicotianae (strain ATCC BAA-1114 / GMI1000) (Ralstonia solanacearum).